A 114-amino-acid chain; its full sequence is Iron-sulfur cluster insertion protein ErpA (114 aa).

Residues Cys-42, Cys-106, and Cys-108 each coordinate iron-sulfur cluster.

This sequence belongs to the HesB/IscA family. As to quaternary structure, homodimer. Requires iron-sulfur cluster as cofactor.

In terms of biological role, required for insertion of 4Fe-4S clusters for at least IspG. This is Iron-sulfur cluster insertion protein ErpA from Buchnera aphidicola subsp. Acyrthosiphon pisum (strain 5A).